The following is a 167-amino-acid chain: Osteocalcin 2a (167 aa).

The signal sequence occupies residues 1 to 18 (MKSLTLLTICAVLSVSLS). A propeptide spanning residues 19–118 (MNDLALDVVL…LASVLLRRKR (100 aa)) is cleaved from the precursor. The tract at residues 28-99 (LDPAPDPATE…TTEDPAAATE (72 aa)) is disordered. The segment covering 38 to 87 (PAPAADSSASSSASSSSSSASDSSASASDSSDSDSSSASSSSSSSESASA) has biased composition (low complexity). A Gla domain is found at 131–163 (QVESLSEVCELNLACEHMAETAGIVAAYTAYYG). Glu-133, Glu-137, and Glu-140 together coordinate Ca(2+). Residues Glu-133, Glu-137, and Glu-140 each carry the 4-carboxyglutamate modification. Cys-139 and Cys-145 are oxidised to a cystine.

This sequence belongs to the osteocalcin/matrix Gla protein family. Gamma-carboxyglutamate residues are formed by vitamin K dependent carboxylation. These residues are essential for the binding of calcium.

It localises to the secreted. Binds strongly to apatite and calcium. The polypeptide is Osteocalcin 2a (Oncorhynchus mykiss (Rainbow trout)).